The chain runs to 110 residues: MARVKRGVIARARHKKILKQAKGYYGARSRVYRVAFQAVIKAGQYAYRDRRQRKRQFRQLWIARINAAARQNGISYSKFINGLKKASVEIDRKILADIAVFDKVAFHHSG.

Belongs to the bacterial ribosomal protein bL20 family.

Binds directly to 23S ribosomal RNA and is necessary for the in vitro assembly process of the 50S ribosomal subunit. It is not involved in the protein synthesizing functions of that subunit. This chain is Large ribosomal subunit protein bL20, found in Shigella boydii serotype 4 (strain Sb227).